Consider the following 79-residue polypeptide: Sec-independent protein translocase protein TatA (79 aa).

Residues Met-1–Phe-21 form a helical membrane-spanning segment. Basic and acidic residues predominate over residues Glu-49–Lys-61. The segment at Glu-49–Ala-79 is disordered.

Belongs to the TatA/E family. In terms of assembly, the Tat system comprises two distinct complexes: a TatABC complex, containing multiple copies of TatA, TatB and TatC subunits, and a separate TatA complex, containing only TatA subunits. Substrates initially bind to the TatABC complex, which probably triggers association of the separate TatA complex to form the active translocon.

It is found in the cell inner membrane. Functionally, part of the twin-arginine translocation (Tat) system that transports large folded proteins containing a characteristic twin-arginine motif in their signal peptide across membranes. TatA could form the protein-conducting channel of the Tat system. In Campylobacter jejuni subsp. doylei (strain ATCC BAA-1458 / RM4099 / 269.97), this protein is Sec-independent protein translocase protein TatA.